Consider the following 214-residue polypeptide: Thiamine-phosphate synthase (214 aa).

4-amino-2-methyl-5-(diphosphooxymethyl)pyrimidine-binding positions include 37-41 (QLRDK) and Asn69. Mg(2+)-binding residues include Asp70 and Asp89. Ser108 lines the 4-amino-2-methyl-5-(diphosphooxymethyl)pyrimidine pocket. 134–136 (TDS) provides a ligand contact to 2-[(2R,5Z)-2-carboxy-4-methylthiazol-5(2H)-ylidene]ethyl phosphate. Lys137 lines the 4-amino-2-methyl-5-(diphosphooxymethyl)pyrimidine pocket. Residues Gly167 and 187–188 (IS) each bind 2-[(2R,5Z)-2-carboxy-4-methylthiazol-5(2H)-ylidene]ethyl phosphate.

This sequence belongs to the thiamine-phosphate synthase family. It depends on Mg(2+) as a cofactor.

The catalysed reaction is 2-[(2R,5Z)-2-carboxy-4-methylthiazol-5(2H)-ylidene]ethyl phosphate + 4-amino-2-methyl-5-(diphosphooxymethyl)pyrimidine + 2 H(+) = thiamine phosphate + CO2 + diphosphate. It catalyses the reaction 2-(2-carboxy-4-methylthiazol-5-yl)ethyl phosphate + 4-amino-2-methyl-5-(diphosphooxymethyl)pyrimidine + 2 H(+) = thiamine phosphate + CO2 + diphosphate. The enzyme catalyses 4-methyl-5-(2-phosphooxyethyl)-thiazole + 4-amino-2-methyl-5-(diphosphooxymethyl)pyrimidine + H(+) = thiamine phosphate + diphosphate. It participates in cofactor biosynthesis; thiamine diphosphate biosynthesis; thiamine phosphate from 4-amino-2-methyl-5-diphosphomethylpyrimidine and 4-methyl-5-(2-phosphoethyl)-thiazole: step 1/1. Functionally, condenses 4-methyl-5-(beta-hydroxyethyl)thiazole monophosphate (THZ-P) and 2-methyl-4-amino-5-hydroxymethyl pyrimidine pyrophosphate (HMP-PP) to form thiamine monophosphate (TMP). This chain is Thiamine-phosphate synthase, found in Natronomonas pharaonis (strain ATCC 35678 / DSM 2160 / CIP 103997 / JCM 8858 / NBRC 14720 / NCIMB 2260 / Gabara) (Halobacterium pharaonis).